A 446-amino-acid chain; its full sequence is Forkhead box protein F2 (446 aa).

Positions 1–18 (MSTEGGPPPPPPRPPPAP) are enriched in pro residues. Residues 1-97 (MSTEGGPPPP…TKKATSGLRR (97 aa)) form a disordered region. A compositionally biased stretch (low complexity) spans 45-78 (STSSSSSSSSASCASSSSNSVSASAGACKSAASS). The fork-head DNA-binding region spans 100–194 (KPPYSYIALI…EEGSFRRRPR (95 aa)). 3 disordered regions span residues 257-278 (AGAP…HMSP), 304-325 (GGGG…SPAM), and 340-371 (AHWS…GLHP). Basic residues predominate over residues 263–274 (AHPHHLHHHHVP). Low complexity predominate over residues 311–325 (GPDSSSSPVPSSPAM).

In terms of assembly, interacts with the transcription factors TBP and TFIIB. Uniquely expressed in the bronchiolar epithelium and in type II pneumocytes.

Its subcellular location is the nucleus. Its function is as follows. Probable transcription activator for a number of lung-specific genes. Mediates up-regulation of the E3 ligase IRF2BPL and drives ubiquitination and degradation of CTNNB1. This is Forkhead box protein F2 (Foxf2) from Mus musculus (Mouse).